Reading from the N-terminus, the 150-residue chain is Large ribosomal subunit protein uL13 (150 aa).

Residues 127–150 are disordered; the sequence is KGTEHPHSAQKPQPLQLNPSATAK. The segment covering 136 to 150 has biased composition (polar residues); that stretch reads QKPQPLQLNPSATAK.

The protein belongs to the universal ribosomal protein uL13 family. Part of the 50S ribosomal subunit.

This protein is one of the early assembly proteins of the 50S ribosomal subunit, although it is not seen to bind rRNA by itself. It is important during the early stages of 50S assembly. The sequence is that of Large ribosomal subunit protein uL13 from Synechococcus sp. (strain CC9902).